A 309-amino-acid polypeptide reads, in one-letter code: Pantothenate kinase (309 aa).

92–99 (GSVAVGKS) contributes to the ATP binding site.

This sequence belongs to the prokaryotic pantothenate kinase family.

The protein resides in the cytoplasm. It carries out the reaction (R)-pantothenate + ATP = (R)-4'-phosphopantothenate + ADP + H(+). It participates in cofactor biosynthesis; coenzyme A biosynthesis; CoA from (R)-pantothenate: step 1/5. In Latilactobacillus sakei subsp. sakei (strain 23K) (Lactobacillus sakei subsp. sakei), this protein is Pantothenate kinase.